We begin with the raw amino-acid sequence, 137 residues long: Phosphomevalonate dehydratase small subunit (137 aa).

Residue serine 62 is the Proton acceptor of the active site.

It belongs to the AcnX type II small subunit family. Heterodimer composed of a large subunit (PMDh-L) and a small subunit (PMDh-S).

The enzyme catalyses (R)-5-phosphomevalonate = (2E)-3-methyl-5-phosphooxypent-2-enoate + H2O. It participates in isoprenoid biosynthesis; isopentenyl diphosphate biosynthesis via mevalonate pathway. In terms of biological role, component of a hydro-lyase that catalyzes the dehydration of mevalonate 5-phosphate (MVA5P) to form trans-anhydromevalonate 5-phosphate (tAHMP). Involved in the archaeal mevalonate (MVA) pathway, which provides fundamental precursors for isoprenoid biosynthesis, such as isopentenyl diphosphate (IPP) and dimethylallyl diphosphate (DMAPP). The polypeptide is Phosphomevalonate dehydratase small subunit (Methanothrix thermoacetophila (strain DSM 6194 / JCM 14653 / NBRC 101360 / PT) (Methanosaeta thermophila)).